The chain runs to 440 residues: Putative short-chain fatty acid transporter (440 aa).

The Periplasmic portion of the chain corresponds to 1–19 (MIGRISRFMTRFVSRWLPD). The helical transmembrane segment at 20–40 (PLIFAMLLTLLTFVIALWLTP) threads the bilayer. The Cytoplasmic segment spans residues 41-53 (QTPISMVKMWGDG). The helical transmembrane segment at 54–74 (FWNLLAFGMQMALIIVTGHAL) threads the bilayer. At 75 to 102 (ASSAPVKSLLRTAASAAKTPVQGVMLVT) the chain is on the periplasmic side. A helical membrane pass occupies residues 103–123 (FFGSVACVINWGFGLVVGAMF). The Cytoplasmic segment spans residues 124–137 (AREVARRVPGSDYP). A run of 2 helical transmembrane segments spans residues 138-158 (LLIA…SGSM) and 159-179 (PLLA…IPVG). D180 is a topological domain (cytoplasmic). Residues 181 to 201 (TLFSGFNIFITVALIVVMPFI) traverse the membrane as a helical segment. Residues 202–244 (TRMMMPKPSDVVSIDPKLLMEEADFQKQLPKDAPPSERLEESR) lie on the Periplasmic side of the membrane. 2 helical membrane passes run 245-265 (ILTL…FSEH) and 266-286 (GFNI…LLLH). The Periplasmic segment spans residues 287-313 (KTPMAYMRAISAAARSTAGILVQFPFY). The chain crosses the membrane as a helical span at residues 314–334 (AGIQLMMEHSGLGGLITEFFI). The Cytoplasmic portion of the chain corresponds to 335–351 (NVANKDTFPVMTFFSSA). The helical transmembrane segment at 352 to 372 (LINFAVPSGGGHWVIQGPFVI) threads the bilayer. The Periplasmic segment spans residues 373–394 (PAAQALGADLGKSVMAIAYGEQ). The chain crosses the membrane as a helical span at residues 395–415 (WMNMAQPFWALPALAIAGLGV). The Cytoplasmic portion of the chain corresponds to 416-419 (RDIM). The helical transmembrane segment at 420 to 440 (GYCITALLFSGVIFVIGLTLF) threads the bilayer.

Its subcellular location is the cell inner membrane. Its function is as follows. May be responsible for the uptake of short-chain fatty acids. This is Putative short-chain fatty acid transporter (atoE) from Escherichia coli (strain K12).